We begin with the raw amino-acid sequence, 497 residues long: RNA polymerase sigma factor SigA (497 aa).

Disordered regions lie at residues 1 to 20 (MSTD…PELS) and 62 to 86 (KTLH…HAPL). Over residues 63–73 (TLHENKESDVP) the composition is skewed to basic and acidic residues. Positions 74–84 (KKRRGRKPKHA) are enriched in basic residues. Positions 250-320 (LVTSNLRLVV…TRAIADQART (71 aa)) are sigma-70 factor domain-2. The short motif at 274 to 277 (DLIQ) is the Interaction with polymerase core subunit RpoC element. A sigma-70 factor domain-3 region spans residues 329–410 (ETINRLAKAE…DTDAQTPDEF (82 aa)). Positions 423-478 (LLNNNLSEQEELIVRMRIGMPPYNEPKTLDEVGQKILIPREKIRQIENKAIRKLRH) are sigma-70 factor domain-4. The H-T-H motif DNA-binding region spans 451–470 (LDEVGQKILIPREKIRQIEN).

The protein belongs to the sigma-70 factor family. RpoD/SigA subfamily. Interacts transiently with the RNA polymerase catalytic core.

The protein localises to the cytoplasm. Its function is as follows. Sigma factors are initiation factors that promote the attachment of RNA polymerase to specific initiation sites and are then released. This sigma factor is the primary sigma factor during exponential growth. The chain is RNA polymerase sigma factor SigA from Mycoplasma genitalium (strain ATCC 33530 / DSM 19775 / NCTC 10195 / G37) (Mycoplasmoides genitalium).